The primary structure comprises 547 residues: Chaperonin GroEL (547 aa).

ATP contacts are provided by residues 30–33 (TLGP), K51, 87–91 (DGTTT), G415, and D495.

Belongs to the chaperonin (HSP60) family. In terms of assembly, forms a cylinder of 14 subunits composed of two heptameric rings stacked back-to-back. Interacts with the co-chaperonin GroES.

The protein localises to the cytoplasm. It carries out the reaction ATP + H2O + a folded polypeptide = ADP + phosphate + an unfolded polypeptide.. Together with its co-chaperonin GroES, plays an essential role in assisting protein folding. The GroEL-GroES system forms a nano-cage that allows encapsulation of the non-native substrate proteins and provides a physical environment optimized to promote and accelerate protein folding. The polypeptide is Chaperonin GroEL (Bartonella quintana (strain Toulouse) (Rochalimaea quintana)).